Here is a 307-residue protein sequence, read N- to C-terminus: Ninja-family protein 5 (307 aa).

Disordered stretches follow at residues 1–159 (MASR…EHTV) and 173–208 (TAGS…EPQP). Residues 8–30 (GGFGRDGGQAPVGGAGAAPGPGG) show a composition bias toward gly residues. Composition is skewed to polar residues over residues 63–83 (QRSS…GTSC) and 173–183 (TAGSPTPSRPQ).

Belongs to the Ninja family.

The protein resides in the nucleus. The polypeptide is Ninja-family protein 5 (Zea mays (Maize)).